Consider the following 396-residue polypeptide: Probable sugar efflux transporter (396 aa).

Residues 1–14 lie on the Cytoplasmic side of the membrane; it reads MTTNTVSRKVAWLR. The helical transmembrane segment at 15–35 threads the bilayer; the sequence is VVTLAVAAFIFNTTEFVPVGL. Residues 36–49 lie on the Periplasmic side of the membrane; it reads LSDIAQSFHMQTAQ. The chain crosses the membrane as a helical span at residues 50–70; that stretch reads VGIMLTIYAWVVALMSLPFML. Topologically, residues 71-80 are cytoplasmic; sequence MTSQVERRKL. A helical membrane pass occupies residues 81–101; sequence LICLFVVFIASHVLSFLSWSF. Position 102 (Thr102) is a topological domain, periplasmic. A helical membrane pass occupies residues 103-123; that stretch reads VLVISRIGVAFAHAIFWSITA. Topologically, residues 124-135 are cytoplasmic; sequence SLAIRMAPAGKR. Residues 136–156 form a helical membrane-spanning segment; sequence AQALSLIATGTALAMVLGLPL. Residues 157–169 lie on the Periplasmic side of the membrane; that stretch reads GRIVGQYFGWRMT. Residues 170–190 form a helical membrane-spanning segment; sequence FFAIGIGALITLLCLIKLLPL. Topologically, residues 191–208 are cytoplasmic; sequence LPSEHSGSLKSLPLLFRR. Residues 209–229 form a helical membrane-spanning segment; the sequence is PALMSIYLLTVVVVTAHYTAY. Residues 230–245 are Periplasmic-facing; the sequence is SYIEPFVQNIAGFSAN. Residues 246-266 traverse the membrane as a helical segment; that stretch reads FATALLLLLGGAGIIGSVIFG. The Cytoplasmic portion of the chain corresponds to 267–274; that stretch reads KLGNQYAS. Residues 275 to 295 form a helical membrane-spanning segment; that stretch reads ALVSTAIALLLVCLALLLPAA. Residues 296–298 lie on the Periplasmic side of the membrane; it reads NSE. Residues 299-319 form a helical membrane-spanning segment; the sequence is IHLGVLSIFWGIAMMIIGLGM. Over 320–332 the chain is Cytoplasmic; that stretch reads QVKVLALAPDATD. A helical membrane pass occupies residues 333-353; sequence VAMALFSGIFNIGIGAGALVG. Residues 354 to 363 lie on the Periplasmic side of the membrane; the sequence is NQVSLHWSMS. The chain crosses the membrane as a helical span at residues 364–384; sequence MIGYVGTVPAFAALIWSIIIF. Over 385–396 the chain is Cytoplasmic; that stretch reads RRWPVTLEEQTQ.

Belongs to the major facilitator superfamily. SotB (TC 2.A.1.2) family.

Its subcellular location is the cell inner membrane. In terms of biological role, involved in the efflux of sugars. The physiological role may be the reduction of the intracellular concentration of toxic sugars or sugar metabolites. This Escherichia coli O157:H7 protein is Probable sugar efflux transporter.